A 362-amino-acid polypeptide reads, in one-letter code: Shewanella-like protein phosphatase 1 (362 aa).

Residues 1-23 (MIFKKALYILLFLYIAIVKKGES) form the signal peptide. Mn(2+)-binding residues include D65, H67, D101, and N136. H137 serves as the catalytic Proton donor. H196 lines the Mn(2+) pocket.

Belongs to the metallophosphoesterase superfamily. SLP family. Mn(2+) serves as cofactor.

Functionally, phosphatase which plays an essential role in the development and differentiation of the ookinete and in the formation of ookinete micronemes. The chain is Shewanella-like protein phosphatase 1 from Plasmodium berghei (strain Anka).